Here is a 923-residue protein sequence, read N- to C-terminus: Mitochondrial 10-formyltetrahydrofolate dehydrogenase (923 aa).

The N-terminal 19 residues, 1–19 (MLWRGSQALRHFSTSRVYF), are a transit peptide targeting the mitochondrion; not cleaved. The tract at residues 23–331 (LKLALIGQSL…PASQYFSAGE (309 aa)) is hydrolase domain. At serine 31 the chain carries Phosphoserine. Lysine 60 carries the post-translational modification N6-succinyllysine. Residue 110–112 (QFI) coordinates (6R)-10-formyltetrahydrofolate. Histidine 128 functions as the Proton donor in the catalytic mechanism. Aspartate 164 serves as a coordination point for (6R)-10-formyltetrahydrofolate. One can recognise a Carrier domain in the interval 339–416 (AEELKVAETI…DFIQKVVRRL (78 aa)). Serine 375 carries the post-translational modification O-(pantetheine 4'-phosphoryl)serine. An aldehyde dehydrogenase domain region spans residues 438–923 (TVKIPYQCFI…LKIKTVTLEY (486 aa)). NADP(+) contacts are provided by residues 592 to 594 (IPW) and 618 to 621 (KPAQ). At serine 650 the chain carries Phosphoserine. NADP(+)-binding positions include 651-656 (GGVAGQ) and 671-672 (GS). Lysine 681 is subject to N6-succinyllysine. Glutamate 694 functions as the Proton acceptor in the catalytic mechanism. An NADP(+)-binding site is contributed by 694–695 (EL). The active-site Proton donor is the cysteine 728. NADP(+) is bound by residues lysine 778 and 825–827 (ESF). At lysine 903 the chain carries N6-acetyllysine.

In the N-terminal section; belongs to the GART family. The protein in the C-terminal section; belongs to the aldehyde dehydrogenase family. ALDH1L subfamily. In terms of processing, phosphopantetheinylation at Ser-375 by AASDHPPT is required for the formyltetrahydrofolate dehydrogenase activity.

The protein resides in the mitochondrion. It carries out the reaction (6R)-10-formyltetrahydrofolate + NADP(+) + H2O = (6S)-5,6,7,8-tetrahydrofolate + CO2 + NADPH + H(+). In terms of biological role, mitochondrial 10-formyltetrahydrofolate dehydrogenase that catalyzes the NADP(+)-dependent conversion of 10-formyltetrahydrofolate to tetrahydrofolate and carbon dioxide. This chain is Mitochondrial 10-formyltetrahydrofolate dehydrogenase, found in Mus musculus (Mouse).